A 606-amino-acid polypeptide reads, in one-letter code: MPSCQPGKMPAPWPWWLQLLLCIPSCVAVLPGRAGELKVSTQTGSVRGLSLPVLDGHVSAFLGIPFAEPPLGRMRFLRPEPVKPWQHVLDATSYKPACYQMVDTSYPGFQGTEMWNPNRGMSEDCLYLNIWVPSPRPKDAPVLVWIYGGGFYSGAASLDVYDGRFLTYTQNVILVSLSYRVGAFGFLGLPGSPEAPGNMGLLDQRLALQWIQNNIHPFGGNPRAVTVFGESAGAASVGMHLLSTQSRTLFQRAILQSGGPNAPWATVTPAESRGRAALLGKQLGCHFNNDSELVSCLRSKNPQELIDEEWSVLPYKSIFRFPFVPVIDGDFFPDTPEAMLSSGNFKETQVLLGVVKDEGSYFLIYGLPGFSKDNESLISRADFLEGVRMSVPHANDIATDAVVLQYTDWQDQDNREKNREALDDIVGDHNVICPVVQFANDYAKRNSKVYAYLFDHRASNLLWPPWMGVPHGYEIEFVFGLPLNDSLNYTPQEKELSRRMMRYWANFARTGNPTDPADKSGAWPTYTASQPQYVQLNTQPLATQPSLRAQICAFWNHFLPKLLNATDNIEEAERQWKLEFHLWSAYMMHWKSQFDHYNKQDRCSEL.

A signal peptide spans 1-28 (MPSCQPGKMPAPWPWWLQLLLCIPSCVA). C98 and C125 are joined by a disulfide. Residue S231 is the Acyl-ester intermediate of the active site. An intrachain disulfide couples C285 to C296. N289 is a glycosylation site (N-linked (GlcNAc...) asparagine). Residue E358 is the Charge relay system of the active site. N-linked (GlcNAc...) asparagine glycosylation is present at N374. An intrachain disulfide couples C433 to C552. The Charge relay system role is filled by H471. N-linked (GlcNAc...) asparagine glycosylation occurs at N484.

It belongs to the type-B carboxylesterase/lipase family. As to quaternary structure, isoform S is monomeric. Isoform T can form oligomers, including collagen-tailed forms. In terms of processing, the N-terminus is blocked. In terms of tissue distribution, liver and muscle contain both isoform T and isoform S. Venom gland predominantly contains isoform S.

It localises to the synapse. The protein localises to the secreted. Its subcellular location is the cell membrane. The enzyme catalyses acetylcholine + H2O = choline + acetate + H(+). With respect to regulation, inhibited by active site inhibitors: edrophonium, trimethyl-(m-acetamidopheny1)-ammonium iodide, and trimethyl-(p-acetarnidopheny1)-ammonium iodide. Inhibited by both active and peripheral site inhibitors: decamethonium, and BW284c51. Inhibited by peripheral site inhibitors: snake acetylcholinesterase fasciculin-2, propidium, gallamine, D-tubocurarine, and tacrine. Also inhibited by antibodies Elec410 and Fab410. Its function is as follows. In muscle, it terminates signal transduction at the neuromuscular junction by rapid hydrolysis of the acetylcholine released into the synaptic cleft. In liver, its function is unclear: it could serve as a safeguard against any diffusion of acetylcholine from synapses into the circulation. In venom, its toxic role is unclear: it could result in less musculatory control by rapidly hydrolyzing acetylcholine, or that it works synergistically with alkaline phosphatase (ALP) in paralyzing prey through hypotension. In Bungarus fasciatus (Banded krait), this protein is Acetylcholinesterase (ACHE).